Consider the following 728-residue polypeptide: UvrABC system protein C (728 aa).

The GIY-YIG domain occupies 16-95 (DSPGVYRFRD…IKEYDPRFNV (80 aa)). The 36-residue stretch at 208-243 (GTYLRRLERQMAEAAEEMEYERAARLRDDIGALKKA) folds into the UVR domain. 2 disordered regions span residues 473–535 (ADGE…GRPK) and 689–728 (VNTA…GQER). Residues 487–505 (GDAAPNGDAAPNDGAAPDD) are compositionally biased toward low complexity.

It belongs to the UvrC family. Interacts with UvrB in an incision complex.

It is found in the cytoplasm. In terms of biological role, the UvrABC repair system catalyzes the recognition and processing of DNA lesions. UvrC both incises the 5' and 3' sides of the lesion. The N-terminal half is responsible for the 3' incision and the C-terminal half is responsible for the 5' incision. The polypeptide is UvrABC system protein C (Streptomyces coelicolor (strain ATCC BAA-471 / A3(2) / M145)).